A 635-amino-acid polypeptide reads, in one-letter code: Threonine--tRNA ligase (635 aa).

In terms of domain architecture, TGS spans 1–61; that stretch reads MINISFPDGS…DNDCKLRILT (61 aa). The segment at 242-533 is catalytic; the sequence is DHRKLGRELD…LIEEYAGRFP (292 aa). The Zn(2+) site is built by C333, H384, and H510.

It belongs to the class-II aminoacyl-tRNA synthetase family. In terms of assembly, homodimer. Requires Zn(2+) as cofactor.

The protein resides in the cytoplasm. The catalysed reaction is tRNA(Thr) + L-threonine + ATP = L-threonyl-tRNA(Thr) + AMP + diphosphate + H(+). Functionally, catalyzes the attachment of threonine to tRNA(Thr) in a two-step reaction: L-threonine is first activated by ATP to form Thr-AMP and then transferred to the acceptor end of tRNA(Thr). Also edits incorrectly charged L-seryl-tRNA(Thr). This Rickettsia peacockii (strain Rustic) protein is Threonine--tRNA ligase.